The chain runs to 340 residues: Flap endonuclease 1 (340 aa).

The tract at residues Met-1–Lys-98 is N-domain. 7 residues coordinate Mg(2+): Asp-27, Asp-80, Glu-152, Glu-154, Asp-173, Asp-175, and Asp-236. An I-domain region spans residues Asp-116–Ser-258.

It belongs to the XPG/RAD2 endonuclease family. FEN1 subfamily. As to quaternary structure, interacts with PCNA. PCNA stimulates the nuclease activity without altering cleavage specificity. Mg(2+) is required as a cofactor.

Functionally, structure-specific nuclease with 5'-flap endonuclease and 5'-3' exonuclease activities involved in DNA replication and repair. During DNA replication, cleaves the 5'-overhanging flap structure that is generated by displacement synthesis when DNA polymerase encounters the 5'-end of a downstream Okazaki fragment. Binds the unpaired 3'-DNA end and kinks the DNA to facilitate 5' cleavage specificity. Cleaves one nucleotide into the double-stranded DNA from the junction in flap DNA, leaving a nick for ligation. Also involved in the base excision repair (BER) pathway. Acts as a genome stabilization factor that prevents flaps from equilibrating into structures that lead to duplications and deletions. Also possesses 5'-3' exonuclease activity on nicked or gapped double-stranded DNA. This chain is Flap endonuclease 1, found in Nitrosopumilus maritimus (strain SCM1).